We begin with the raw amino-acid sequence, 239 residues long: tRNA (guanine-N(7)-)-methyltransferase (239 aa).

The S-adenosyl-L-methionine site is built by E69, E94, D121, and D144. Residue D144 is part of the active site. Substrate is bound by residues K148, D180, and 217 to 220; that span reads TKFE.

The protein belongs to the class I-like SAM-binding methyltransferase superfamily. TrmB family. In terms of assembly, monomer.

It catalyses the reaction guanosine(46) in tRNA + S-adenosyl-L-methionine = N(7)-methylguanosine(46) in tRNA + S-adenosyl-L-homocysteine. It participates in tRNA modification; N(7)-methylguanine-tRNA biosynthesis. Functionally, catalyzes the formation of N(7)-methylguanine at position 46 (m7G46) in tRNA. This is tRNA (guanine-N(7)-)-methyltransferase from Buchnera aphidicola subsp. Acyrthosiphon pisum (strain Tuc7).